We begin with the raw amino-acid sequence, 493 residues long: UDP-N-acetylmuramate--L-alanine ligase (493 aa).

126–132 (GTHGKTT) provides a ligand contact to ATP.

Belongs to the MurCDEF family.

It is found in the cytoplasm. It carries out the reaction UDP-N-acetyl-alpha-D-muramate + L-alanine + ATP = UDP-N-acetyl-alpha-D-muramoyl-L-alanine + ADP + phosphate + H(+). It functions in the pathway cell wall biogenesis; peptidoglycan biosynthesis. Functionally, cell wall formation. This chain is UDP-N-acetylmuramate--L-alanine ligase, found in Hamiltonella defensa subsp. Acyrthosiphon pisum (strain 5AT).